Consider the following 790-residue polypeptide: Sodium- and chloride-dependent glycine transporter 2 (790 aa).

The segment at 1-39 (MDYVNVVDGSKKTMNSPEGAAPGLIGATGITNPTPDNDL) is disordered. Residues 1 to 192 (MDYVNVVDGS…ARGNWSNKLD (192 aa)) lie on the Cytoplasmic side of the membrane. 3 helical membrane-spanning segments follow: residues 193–213 (FILSMVGYAVGLGNVWRFPYL), 220–240 (GAFLIPYLTMLALAGLPIFYL), and 264–284 (GCGIAMLIISVLIAIYYNIIM). Glycine 199, alanine 201, valine 202, and asparagine 206 together coordinate Na(+). The Extracellular segment spans residues 285–387 (CYTIFYLFAS…GIEYPGEIRW (103 aa)). A disulfide bridge links cysteine 304 with cysteine 313. Asparagine 336, asparagine 346, asparagine 351, and asparagine 357 each carry an N-linked (GlcNAc...) asparagine glycan. 3 helical membrane passes run 388–408 (PLVFCLFLAWIIVYASLAKGI), 427–447 (VILLFRGVTLPGAGDGIWWFI), and 463–483 (AATQIFFSLSAAWGGLITLSS). Residues serine 470 and asparagine 502 each coordinate Na(+). A run of 6 helical transmembrane segments spans residues 504–524 (ATSIFAGFVIFSVIGFMAHIL), 556–576 (WAIIFFLMLLTLGLDTMFATI), 597–617 (LFTLVCCVAFFIMGFPMITQG), 631–651 (SYSLVIIAIFELVGISYIYGL), 672–692 (ICWAFVTPTILTFILGFSFYQ), and 708–728 (MVMGWLMLACSVIWIPIMFVI). Na(+) contacts are provided by leucine 567 and aspartate 570. The Cytoplasmic portion of the chain corresponds to 729–790 (KMFLAPGTFI…PKDFELGTQC (62 aa)).

This sequence belongs to the sodium:neurotransmitter symporter (SNF) (TC 2.A.22) family. SLC6A5 subfamily. In terms of tissue distribution, first expressed in late neurula stages in the anterior spinal cord, where expression intensifies through the tailbud stages, and by hatching, expression is seen in the hindbrain. During late hatching stages, expression extends along most of the length of the spinal cord, mildly intensifies in the hindbrain, and appears in localized regions of the lateral forebrain and medial midbrain. By the swimming tadpole stage, weak expression appears in the anterior hindbrain, with stronger expression in the posterior, postmitotic neurons.

The protein resides in the cell membrane. It catalyses the reaction glycine(out) + chloride(out) + 3 Na(+)(out) = glycine(in) + chloride(in) + 3 Na(+)(in). In terms of biological role, sodium- and chloride-dependent glycine transporter. Terminates the action of glycine by its high affinity sodium-dependent reuptake into presynaptic terminals. May be responsible for the termination of neurotransmission at strychnine-sensitive glycinergic synapses. This is Sodium- and chloride-dependent glycine transporter 2 from Xenopus laevis (African clawed frog).